The primary structure comprises 462 residues: Prenyltransferase phqI (462 aa).

E101 provides a ligand contact to brevianamide F. Residues R117, K204, Y206, K273, Y275, Y357, Y442, and Y446 each contribute to the dimethylallyl diphosphate site.

Belongs to the tryptophan dimethylallyltransferase family.

It functions in the pathway alkaloid biosynthesis. In terms of biological role, prenyltransferase; part of the gene cluster that mediates the biosynthesis of paraherquamide, a fungal indole alkaloid that belongs to a family of natural products containing a characteristic bicyclo[2.2.2]diazaoctane core. The first steps in the biosynthesis of paraherquamide is the production of the beta-methyl-proline precursor from L-isoleucine. They require oxidation of a terminally hydroxylated L-isoleucine to the corresponding aldehyde by enzymes which have still to be identified. Spontaneous cyclization and dehydration would yield the 4-methyl pyrolline-5-carboxylic acid, which is then reduced by the pyrroline-5-carboxylate reductase phqD leading to the beta-methyl-proline precursor. The next step of paraherquamide biosynthesis involves coupling of beta-methyl-proline and L-tryptophan by the bimodular NRPS phqB, to produce a monooxopiperazine intermediate. The reductase (R) domain of phqB utilizes NADPH for hydride transfer to reduce the thioester bond of the T domain-tethered linear dipeptide to a hemithioaminal intermediate, which spontaneously cleaves the C-S bond to release the aldehyde product. This compound undergoes spontaneous cyclization and dehydration to give a dienamine which is reverse prenylated at C-2 by the reverse prenyltransferase phqJ. The other prenyltransferase present in the cluster, phqI may be a redundant gene in the pathway. During biosynthetic assembly, the key step to produce the polycyclic core is catalyzed by the bifunctional reductase and intramolecular [4+2] Diels-Alderase, phqE, resulting in formation of the [2.2.2] diazaoctane intermediate preparaherquamide. Following formation of preparaherquamide, an indole 2,3-epoxidation-initiated pinacol-like rearrangement is catalyzed by the phqK FAD-dependent monooxygenase. The prenyltransferase phqA, the cytochrome P450 monooxygenase phqL, and the FAD-linked oxidoreductase phqH (or the cytochrome P450 monooxygenase phqM), are proposed to be involved in the formation of the pyran ring. The FAD-dependent monooxygenase phqK is likely responsible for generation of the spiro-oxindole, and the N-methylation is likely mediated by the phqN methyltransferase leading to the isolable natural product paraherquamide F. However, the order of these biosynthetic steps has still to be determined. In late-stage paraherquamide biosynthesis, the third P450 monooxygenase, phqO, is probably responsible for the C-14 hydroxylation, transforming paraherquamide F to paraherquamide G, and paraherquamide E to the final product paraherquamide A. The expansion from the 6-membered ring pyran (in paraherquamides F and G) to the 7-membered dioxepin ring (in paraherquamides A and E) represents a poorly understood but intriguing process that probably involves the 2-oxoglutarate-dependent dioxygenase phqC. Finally, the remaining members of the paraherquamide cluster, including phqI as well as phqM (or phqH), do not have a clearly prescribed role and appear to be redundant. This is Prenyltransferase phqI from Penicillium fellutanum.